An 884-amino-acid chain; its full sequence is Cadherin-1 (884 aa).

The N-terminal stretch at methionine 1 to glutamine 23 is a signal peptide. Positions glutamate 24–arginine 156 are excised as a propeptide. The segment at lysine 119–proline 139 is disordered. Residues methionine 121–arginine 131 are compositionally biased toward basic residues. Cadherin domains lie at aspartate 157 to phenylalanine 264, threonine 265 to phenylalanine 377, asparagine 378 to phenylalanine 488, methionine 489 to proline 595, and isoleucine 596 to lysine 699. The Extracellular portion of the chain corresponds to aspartate 157–valine 709. Aspartate 259 lines the Ca(2+) pocket. Serine 282 and serine 287 each carry an O-linked (Man...) serine glycan. Aspartate 290 contacts Ca(2+). O-linked (Man...) threonine glycosylation is found at threonine 360, threonine 472, threonine 474, and threonine 511. Asparagine 560 is a glycosylation site (N-linked (GlcNAc...) asparagine). O-linked (Man...) threonine glycans are attached at residues threonine 578, threonine 580, and threonine 582. An N-linked (GlcNAc...) asparagine glycan is attached at asparagine 639. Residues proline 710 to leucine 733 form a helical membrane-spanning segment. Topologically, residues arginine 734–aspartate 884 are cytoplasmic. Residues aspartate 749–glutamate 808 form a disordered region. Phosphotyrosine; by SRC occurs at positions 755, 756, and 757. A compositionally biased stretch (acidic residues) spans tyrosine 757–phenylalanine 769. The segment at glutamate 760–leucine 771 is required for binding CTNND1 and PSEN1. Residue serine 772 is modified to Phosphoserine. The segment covering arginine 776–arginine 786 has biased composition (basic and acidic residues). A phosphoserine mark is found at serine 795, serine 840, serine 842, and serine 848. The segment at isoleucine 813–aspartate 884 is required for binding alpha, beta and gamma catenins.

In terms of assembly, homodimer; disulfide-linked. Component of an E-cadherin/ catenin adhesion complex composed of at least E-cadherin/CDH1, beta-catenin/CTNNB1 or gamma-catenin/JUP, and potentially alpha-catenin/CTNNA1; the complex is located to adherens junctions. Found in a complex composed of CDH1, RAP1A and PKP3; PKP3 acts as a scaffold protein within the complex, the complex is required for CDH1 localization to mature desmosome cell junctions. Interacts with the TRPV4 and CTNNB1 complex. Interacts with CTNND1. The stable association of CTNNA1 is controversial as CTNNA1 was shown not to bind to F-actin when assembled in the complex. Alternatively, the CTNNA1-containing complex may be linked to F-actin by other proteins such as LIMA1. Interaction with PSEN1, cleaves CDH1 resulting in the disassociation of cadherin-based adherens junctions (CAJs). Interacts with AJAP1 and DLGAP5. Interacts with TBC1D2. Interacts with LIMA1. Interacts with CAV1. Interacts with PIP5K1C. Interacts with RAB8B. Interacts with DDR1; this stabilizes CDH1 at the cell surface and inhibits its internalization. Interacts with RAPGEF2. Interacts with KLRG1. Forms a ternary complex composed of ADAM10, CADH1 and EPHA4; within the complex, CADH1 is cleaved by ADAM10 which disrupts adherens junctions. Interacts with SPEF1. Interacts with CTNNB1 and PKP2. Interacts with AMOTL2; the interaction may facilitate binding of radial actin fibers to cell junction complexes. Interacts with DSG3; the interaction is required for CDH1 localization to developing adherens junctions. Post-translationally, during apoptosis or with calcium influx, cleaved by a membrane-bound metalloproteinase (ADAM10), PS1/gamma-secretase and caspase-3. Processing by the metalloproteinase, induced by calcium influx, causes disruption of cell-cell adhesion and the subsequent release of beta-catenin into the cytoplasm. The residual membrane-tethered cleavage product is rapidly degraded via an intracellular proteolytic pathway. Cleavage by caspase-3 releases the cytoplasmic tail resulting in disintegration of the actin microfilament system. The gamma-secretase-mediated cleavage promotes disassembly of adherens junctions. During development of the cochlear organ of Corti, cleavage by ADAM10 at adherens junctions promotes pillar cell separation. In terms of processing, O-glycosylated. O-manosylated by TMTC1, TMTC2, TMTC3 or TMTC4. Ser-287 and Thr-511 are O-manosylated by TMTC2 or TMTC4 but not TMTC1 or TMTC3. N-glycosylation at Asn-639 is essential for expression, folding and trafficking. Addition of bisecting N-acetylglucosamine by MGAT3 modulates its cell membrane location. Post-translationally, ubiquitinated by a SCF complex containing SKP2, which requires prior phosphorylation by CK1/CSNK1A1. Ubiquitinated by CBLL1/HAKAI, requires prior phosphorylation at Tyr-756. Expressed in inner and outer pillar cells of the organ of Corti (at protein level). Expressed in granuloma macrophages (at protein level). Expressed in the epidermal keratinocytes of the skin from birth (at protein level). Expressed in non-neural epithelial tissues.

It localises to the cell junction. Its subcellular location is the adherens junction. The protein localises to the cell membrane. It is found in the endosome. The protein resides in the golgi apparatus. It localises to the trans-Golgi network. Its subcellular location is the cytoplasm. The protein localises to the desmosome. In terms of biological role, cadherins are calcium-dependent cell adhesion proteins. They preferentially interact with themselves in a homophilic manner in connecting cells; cadherins may thus contribute to the sorting of heterogeneous cell types. CDH1 is involved in mechanisms regulating cell-cell adhesions, mobility and proliferation of epithelial cells. Promotes organization of radial actin fiber structure and cellular response to contractile forces, via its interaction with AMOTL2 which facilitates anchoring of radial actin fibers to CDH1 junction complexes at the cell membrane. Plays a role in the early stages of desmosome cell-cell junction formation via facilitating the recruitment of DSG2 and DSP to desmosome plaques. Has a potent invasive suppressor role. It is a ligand for integrin alpha-E/beta-7. Functionally, E-Cad/CTF2 promotes non-amyloidogenic degradation of Abeta precursors. Has a strong inhibitory effect on APP C99 and C83 production. Its function is as follows. (Microbial infection) Does not function as a receptor for L.monocytogenes internalin A (InlA); mutating a single surface-exposed residue confers receptor activity to this protein and promotes uptake of the bacteria. This is Cadherin-1 (Cdh1) from Mus musculus (Mouse).